Consider the following 203-residue polypeptide: Secreted phosphoprotein 24 (203 aa).

The first 23 residues, 1–23, serve as a signal peptide directing secretion; that stretch reads MELATMKTLVMLVLGMHYWCASG. Disulfide bonds link Cys-86/Cys-96 and Cys-109/Cys-127. Ser-90 carries the phosphoserine modification. Ser-137, Ser-138, and Ser-174 each carry phosphoserine.

It belongs to the SPP2 family. In terms of processing, multiply phosphorylated at serine residues. Post-translationally, phosphorylation sites are present in the extracellular medium.

Its subcellular location is the secreted. In terms of biological role, could coordinate an aspect of bone turnover. This Rattus norvegicus (Rat) protein is Secreted phosphoprotein 24 (Spp2).